The chain runs to 440 residues: Indoleamine 2,3-dioxygenase qulI (440 aa).

Histidine 347 is a heme binding site.

The protein belongs to the indoleamine 2,3-dioxygenase family. Monomer. It depends on heme as a cofactor.

The enzyme catalyses D-tryptophan + O2 = N-formyl-D-kynurenine. The catalysed reaction is L-tryptophan + O2 = N-formyl-L-kynurenine. It participates in secondary metabolite biosynthesis. Functionally, indoleamine 2,3-dioxygenase; part of the gene cluster that mediates the biosynthesis of quinolactacin A2 (QUL A2), a fungal alkaloid that features a quinolone-gamma-lactam hybrid, which is a potential pharmacophore for the treatment of cancer and Alzheimer's disease. The quinolone-gamma-lactam hybrid scaffold is synthesized from the combination of L-isoleucine (L-Ile) and the nonproteinogenic amino acid L-kynurenine, followed by quinolone cyclization, oxidative decarboxylation, and lactam formation. Additionally, the N-methyl group is derived from methionine, which might be catalyzed by an S-adenosylmethionine (SAM)-dependent methyltransferase. Bioconversion of L-tryptophan to L-kynurenine could be catalyzed by the indoleamine-2,3-dioxygenase (IDO) qulI to produce an unstable product, N-formyl-L-kynurenine, followed by kynurenine formamidase catalyzed hydrolysis. QulM then acts as a methyltransferase that methylates L-kynurenine at the N-4 position. The FMN-dependent alpha-hydroxy acid dehydrogenase qulF than functions as an oxidative decarboxylase which converts N-methylkynurenine into 2-aminobenzoylacetamide via 2 tandem reactions, including dehydrogenation and decarboxylation. An amidase located outside of the qul gene cluster further produces the unstable beta-keto acid precursor N-methyl-2-aminobenzoylacetate, which could be spontaneously dehydrated to form N-methyl-4-hydroxy-2-quinolone. The NRPS qulB is able to incorporate N-methyl-2-aminobenzoylacetate and efficiently compete with the spontaneous reaction. By further extending the beta-keto acid with L-Ile, qulA performs a Dieckmann condensation to form the gamma-lactam ring and release a 4-ketopyrrolidinone intermediate from the assembly line. This intermediate could plausibly further undergo a spontaneous cyclization to yield the final quinolone-gamma-lactam hybrid structure. This is Indoleamine 2,3-dioxygenase qulI from Penicillium citrinum.